The sequence spans 204 residues: uncharacterized protein (204 aa).

The first 24 residues, 1–24 (MPINTFCKISLFICALFCSTVTLA), serve as a signal peptide directing secretion.

This is an uncharacterized protein from Pasteurella multocida (strain Pm70).